The sequence spans 506 residues: Plant intracellular Ras-group-related LRR protein 1 (506 aa).

Residues 24–48 form a disordered region; sequence TAKSSSSSDVEPPPSKSDPSSSSNH. Residues 143–193 adopt a coiled-coil conformation; sequence KSILKLNELHESYEKLLKEAEERLVRIYESAEKNAAAVAEEEAAEVEVNEE. LRR repeat units follow at residues 203-225, 226-249, 251-272, 273-295, 297-319, 320-342, 344-364, 365-389, 390-412, and 414-436; these read ENPL…AFGK, IQGL…IAGL, NLLE…IGLL, SKLK…ICHC, SLVV…GFEL, VKLE…IGEM, SLRY…SFGL, LTNL…SFGD, LISL…AFGT, and VNLT…VVKQ. Positions 437–449 match the GVYW motif; sequence GVDAVKMYMGKRW.

This sequence belongs to the SHOC2 family. Widely expressed.

Functionally, leucine-rich repeat protein that likely mediates protein interactions, possibly in the context of signal transduction. PIRL1 acts redundantly with PIRL9 in the differentiation of microspores into pollen. The protein is Plant intracellular Ras-group-related LRR protein 1 (PIRL1) of Arabidopsis thaliana (Mouse-ear cress).